Here is a 340-residue protein sequence, read N- to C-terminus: GTPase Obg (340 aa).

One can recognise an Obg domain in the interval 1–159 (MGFIDEVKLC…KHVLLKLKVL (159 aa)). The 170-residue stretch at 160 to 329 (SDVGIIGMPN…LSEKLKKSNS (170 aa)) folds into the OBG-type G domain. GTP contacts are provided by residues 166–173 (GMPNAGKS), 191–195 (FTTVR), 212–215 (DIPG), 279–282 (NKCD), and 310–312 (NGD). The Mg(2+) site is built by S173 and T193.

It belongs to the TRAFAC class OBG-HflX-like GTPase superfamily. OBG GTPase family. In terms of assembly, monomer. The cofactor is Mg(2+).

The protein resides in the cytoplasm. An essential GTPase which binds GTP, GDP and possibly (p)ppGpp with moderate affinity, with high nucleotide exchange rates and a fairly low GTP hydrolysis rate. Plays a role in control of the cell cycle, stress response, ribosome biogenesis and in those bacteria that undergo differentiation, in morphogenesis control. This is GTPase Obg from Wolbachia pipientis wMel.